The chain runs to 93 residues: Co-chaperonin GroES (93 aa).

The protein belongs to the GroES chaperonin family. Heptamer of 7 subunits arranged in a ring. Interacts with the chaperonin GroEL.

Its subcellular location is the cytoplasm. Its function is as follows. Together with the chaperonin GroEL, plays an essential role in assisting protein folding. The GroEL-GroES system forms a nano-cage that allows encapsulation of the non-native substrate proteins and provides a physical environment optimized to promote and accelerate protein folding. GroES binds to the apical surface of the GroEL ring, thereby capping the opening of the GroEL channel. This is Co-chaperonin GroES from Streptococcus sanguinis.